The primary structure comprises 123 residues: Probable histone H2B 4 (123 aa).

Residues 1 to 30 form a disordered region; sequence MPPKPSAKGAKKAAKTVVAKPKDGKKRRHA. Ser-110 is a glycosylation site (O-linked (GlcNAc) serine). A Glycyl lysine isopeptide (Lys-Gly) (interchain with G-Cter in ubiquitin) cross-link involves residue Lys-118.

The protein belongs to the histone H2B family. As to quaternary structure, the nucleosome is a histone octamer containing two molecules each of H2A, H2B, H3 and H4 assembled in one H3-H4 heterotetramer and two H2A-H2B heterodimers. The octamer wraps approximately 147 bp of DNA. Monoubiquitination of Lys-118 gives a specific tag for epigenetic transcriptional activation and is also prerequisite for histone H3 'Lys-4' and 'Lys-79' methylation. In terms of processing, glcNAcylation at Ser-110 promotes monoubiquitination of Lys-118. It fluctuates in response to extracellular glucose, and associates with transcribed genes.

It localises to the nucleus. Its subcellular location is the chromosome. Its function is as follows. Core component of nucleosome. Nucleosomes wrap and compact DNA into chromatin, limiting DNA accessibility to the cellular machineries which require DNA as a template. Histones thereby play a central role in transcription regulation, DNA repair, DNA replication and chromosomal stability. DNA accessibility is regulated via a complex set of post-translational modifications of histones, also called histone code, and nucleosome remodeling. This is Probable histone H2B 4 (his-48) from Caenorhabditis elegans.